Reading from the N-terminus, the 307-residue chain is Fructokinase (307 aa).

This sequence belongs to the carbohydrate kinase PfkB family.

The catalysed reaction is D-fructose + ATP = D-fructose 6-phosphate + ADP + H(+). Involved in sucrose metabolism. In Klebsiella pneumoniae, this protein is Fructokinase (scrK).